The following is a 311-amino-acid chain: Very-long-chain 3-oxoacyl-CoA reductase-B (311 aa).

The helical transmembrane segment at 8 to 28 threads the bilayer; that stretch reads LFWVGAVTVLWLSVSSLWSLI. 48–77 serves as a coordination point for NADP(+); it reads GKWAVVTGATDGIGKAYAEELARRGFAIVL. Residues 125–145 traverse the membrane as a helical segment; the sequence is IGVLVNNVGVSYSYPEFFLNI. Ser187 lines the substrate pocket. The active-site Proton acceptor is Tyr200. A helical transmembrane segment spans residues 269 to 289; the sequence is GYLPHAIMGWVTASLLPAKLL.

Belongs to the short-chain dehydrogenases/reductases (SDR) family. 17-beta-HSD 3 subfamily.

The protein localises to the endoplasmic reticulum membrane. It carries out the reaction a very-long-chain (3R)-3-hydroxyacyl-CoA + NADP(+) = a very-long-chain 3-oxoacyl-CoA + NADPH + H(+). The enzyme catalyses 17beta-estradiol + NAD(+) = estrone + NADH + H(+). The catalysed reaction is 17beta-estradiol + NADP(+) = estrone + NADPH + H(+). Its pathway is lipid metabolism; fatty acid biosynthesis. It functions in the pathway steroid biosynthesis; estrogen biosynthesis. Functionally, catalyzes the second of the four reactions of the long-chain fatty acids elongation cycle. This endoplasmic reticulum-bound enzymatic process, allows the addition of two carbons to the chain of long- and very long-chain fatty acids/VLCFAs per cycle. This enzyme has a 3-ketoacyl-CoA reductase activity, reducing 3-ketoacyl-CoA to 3-hydroxyacyl-CoA, within each cycle of fatty acid elongation. Thereby, it may participate in the production of VLCFAs of different chain lengths that are involved in multiple biological processes as precursors of membrane lipids and lipid mediators. May also catalyze the transformation of estrone (E1) into estradiol (E2) and play a role in estrogen formation. The chain is Very-long-chain 3-oxoacyl-CoA reductase-B (hsd17b12b) from Danio rerio (Zebrafish).